The following is a 488-amino-acid chain: 3-octaprenyl-4-hydroxybenzoate carboxy-lyase (488 aa).

Mn(2+) is bound at residue N172. Residues 175-177, 189-191, and 194-195 each bind prenylated FMN; these read IYR, RWL, and RG. Residue E238 participates in Mn(2+) binding. Catalysis depends on D287, which acts as the Proton donor.

This sequence belongs to the UbiD family. Homohexamer. Prenylated FMN is required as a cofactor. Mn(2+) serves as cofactor.

It localises to the cell membrane. It carries out the reaction a 4-hydroxy-3-(all-trans-polyprenyl)benzoate + H(+) = a 2-(all-trans-polyprenyl)phenol + CO2. Its pathway is cofactor biosynthesis; ubiquinone biosynthesis. Catalyzes the decarboxylation of 3-octaprenyl-4-hydroxy benzoate to 2-octaprenylphenol, an intermediate step in ubiquinone biosynthesis. This Pseudomonas fluorescens (strain ATCC BAA-477 / NRRL B-23932 / Pf-5) protein is 3-octaprenyl-4-hydroxybenzoate carboxy-lyase.